The primary structure comprises 240 residues: Putative N-acetylmannosamine-6-phosphate 2-epimerase (240 aa).

This sequence belongs to the NanE family.

It carries out the reaction an N-acyl-D-glucosamine 6-phosphate = an N-acyl-D-mannosamine 6-phosphate. It participates in amino-sugar metabolism; N-acetylneuraminate degradation; D-fructose 6-phosphate from N-acetylneuraminate: step 3/5. Its function is as follows. Converts N-acetylmannosamine-6-phosphate (ManNAc-6-P) to N-acetylglucosamine-6-phosphate (GlcNAc-6-P). This Vibrio cholerae serotype O1 (strain ATCC 39541 / Classical Ogawa 395 / O395) protein is Putative N-acetylmannosamine-6-phosphate 2-epimerase.